The sequence spans 507 residues: Variant surface glycoprotein ILTAT 1.25 (507 aa).

Positions 1–21 are cleaved as a signal peptide; sequence MQSQQQPVFISIILLAINTDA. Over residues 83 to 95 the composition is skewed to basic and acidic residues; it reads EPEAAPKESRSDE. The interval 83–102 is disordered; it reads EPEAAPKESRSDETPEACKA. N-linked (GlcNAc...) asparagine glycans are attached at residues Asn141 and Asn371. Positions 384-395 are enriched in low complexity; it reads PTKQPPAKAAAA. The tract at residues 384-474 is disordered; sequence PTKQPPAKAA…KKEEECKSPN (91 aa). Positions 396 to 420 are enriched in basic and acidic residues; that stretch reads PEKKSNPQKDCNKNTKKRDCKEGDG. The span at 444–455 shows a compositional bias: low complexity; sequence SAAGAGDAGASD. Over residues 456–474 the composition is skewed to basic and acidic residues; that stretch reads TEAKKCSDKKKEEECKSPN. The GPI-anchor amidated aspartate moiety is linked to residue Asp484. The propeptide at 485–507 is removed in mature form; the sequence is SSILANKQFALSVASAAFVALLF.

The protein localises to the cell membrane. VSG forms a coat on the surface of the parasite. The trypanosome evades the immune response of the host by expressing a series of antigenically distinct VSGs from an estimated 1000 VSG genes. The sequence is that of Variant surface glycoprotein ILTAT 1.25 from Trypanosoma brucei brucei.